A 157-amino-acid polypeptide reads, in one-letter code: Protein Smg homolog (157 aa).

Belongs to the Smg family.

The polypeptide is Protein Smg homolog (Pseudoalteromonas translucida (strain TAC 125)).